The primary structure comprises 131 residues: D-ribose pyranase (131 aa).

The Proton donor role is filled by His-20. Substrate contacts are provided by residues Asp-28, His-98, and 120-122 (YAN).

This sequence belongs to the RbsD / FucU family. RbsD subfamily. Homodecamer.

It localises to the cytoplasm. The catalysed reaction is beta-D-ribopyranose = beta-D-ribofuranose. Its pathway is carbohydrate metabolism; D-ribose degradation; D-ribose 5-phosphate from beta-D-ribopyranose: step 1/2. Functionally, catalyzes the interconversion of beta-pyran and beta-furan forms of D-ribose. The protein is D-ribose pyranase of Bacillus velezensis (strain DSM 23117 / BGSC 10A6 / LMG 26770 / FZB42) (Bacillus amyloliquefaciens subsp. plantarum).